The following is a 220-amino-acid chain: Deoxyribose-phosphate aldolase (220 aa).

Residue D89 is the Proton donor/acceptor of the active site. K151 (schiff-base intermediate with acetaldehyde) is an active-site residue. K180 functions as the Proton donor/acceptor in the catalytic mechanism.

This sequence belongs to the DeoC/FbaB aldolase family. DeoC type 1 subfamily.

It is found in the cytoplasm. The catalysed reaction is 2-deoxy-D-ribose 5-phosphate = D-glyceraldehyde 3-phosphate + acetaldehyde. Its pathway is carbohydrate degradation; 2-deoxy-D-ribose 1-phosphate degradation; D-glyceraldehyde 3-phosphate and acetaldehyde from 2-deoxy-alpha-D-ribose 1-phosphate: step 2/2. Catalyzes a reversible aldol reaction between acetaldehyde and D-glyceraldehyde 3-phosphate to generate 2-deoxy-D-ribose 5-phosphate. This Bdellovibrio bacteriovorus (strain ATCC 15356 / DSM 50701 / NCIMB 9529 / HD100) protein is Deoxyribose-phosphate aldolase.